The sequence spans 244 residues: 3-deoxy-manno-octulosonate cytidylyltransferase (244 aa).

This sequence belongs to the KdsB family.

The protein localises to the cytoplasm. It carries out the reaction 3-deoxy-alpha-D-manno-oct-2-ulosonate + CTP = CMP-3-deoxy-beta-D-manno-octulosonate + diphosphate. It functions in the pathway nucleotide-sugar biosynthesis; CMP-3-deoxy-D-manno-octulosonate biosynthesis; CMP-3-deoxy-D-manno-octulosonate from 3-deoxy-D-manno-octulosonate and CTP: step 1/1. Its pathway is bacterial outer membrane biogenesis; lipopolysaccharide biosynthesis. In terms of biological role, activates KDO (a required 8-carbon sugar) for incorporation into bacterial lipopolysaccharide in Gram-negative bacteria. The protein is 3-deoxy-manno-octulosonate cytidylyltransferase of Dichelobacter nodosus (strain VCS1703A).